The chain runs to 193 residues: Ion-translocating oxidoreductase complex subunit A (193 aa).

Helical transmembrane passes span 5-25, 39-59, 62-82, 102-122, 134-154, and 171-191; these read LLLL…FLGL, MGMG…AWAV, FILV…LVIA, LLGI…VALL, AVYG…FAAI, and SIAL…SGLV.

Belongs to the NqrDE/RnfAE family. As to quaternary structure, the complex is composed of six subunits: RnfA, RnfB, RnfC, RnfD, RnfE and RnfG.

It is found in the cell inner membrane. In terms of biological role, part of a membrane-bound complex that couples electron transfer with translocation of ions across the membrane. This is Ion-translocating oxidoreductase complex subunit A from Edwardsiella ictaluri (strain 93-146).